The primary structure comprises 414 residues: Tryptophan synthase beta chain (414 aa).

The disordered stretch occupies residues Met1 to Phe26. A compositionally biased stretch (basic and acidic residues) spans Gln10–Phe26. An N6-(pyridoxal phosphate)lysine modification is found at Lys109.

This sequence belongs to the TrpB family. As to quaternary structure, tetramer of two alpha and two beta chains. Requires pyridoxal 5'-phosphate as cofactor.

The enzyme catalyses (1S,2R)-1-C-(indol-3-yl)glycerol 3-phosphate + L-serine = D-glyceraldehyde 3-phosphate + L-tryptophan + H2O. The protein operates within amino-acid biosynthesis; L-tryptophan biosynthesis; L-tryptophan from chorismate: step 5/5. Functionally, the beta subunit is responsible for the synthesis of L-tryptophan from indole and L-serine. This chain is Tryptophan synthase beta chain, found in Prochlorococcus marinus (strain MIT 9312).